Reading from the N-terminus, the 505-residue chain is Calcium/calmodulin-dependent protein kinase kinase 1 (505 aa).

Residues 27 to 66 (HLEEAEEGPEPASNGVDPPPRARAASVIPGSASRPTPVRP) form a disordered region. Serine 67 and serine 74 each carry phosphoserine. At arginine 78 the chain carries Asymmetric dimethylarginine. Serine 100 bears the Phosphoserine mark. Position 108 is a phosphothreonine (threonine 108). Residues 128–409 (YKLQSEIGKG…VSDIKLHPWV (282 aa)) form the Protein kinase domain. ATP is bound by residues 134-142 (IGKGAYGVV) and lysine 157. Residues 167 to 189 (QYGFPRRPPPRGSQAPQGGPAKQ) form an RP domain region. The active-site Proton acceptor is aspartate 275. Positions 435-440 (KNSVKL) are autoinhibitory domain. Residues 438-463 (VKLIPSWTTVILVKSMLRKRSFGNPF) form a calmodulin-binding region. Serine 458, serine 475, and serine 492 each carry phosphoserine. The interval 460-505 (GNPFEPQARREERSMSAPGNLLLKEGCGEGGKSPELPGVQEDEAAS) is disordered.

The protein belongs to the protein kinase superfamily. Ser/Thr protein kinase family. As to quaternary structure, interacts with CAMK4 and calmodulin. In terms of processing, appears to be autophosphorylated. Phosphorylated at multiple sites by PRCAKA/PKA. Phosphorylation of Ser-458 is blocked upon binding to Ca(2+)/calmodulin. May be phosphorylated by CAMK1 and CAMK4. As to expression, mostly expressed in the brain with higher levels in cortex and hippocampus. Lower expression levels were detected in striatum, nucleus accumbens and cerebellum (at protein level). Abundant in forebrain, weaker in cerebellum and also detected in thymus and spleen.

The protein localises to the cytoplasm. It localises to the nucleus. The catalysed reaction is L-seryl-[protein] + ATP = O-phospho-L-seryl-[protein] + ADP + H(+). The enzyme catalyses L-threonyl-[protein] + ATP = O-phospho-L-threonyl-[protein] + ADP + H(+). Activated by Ca(2+)/calmodulin. Binding of calmodulin may relieve intrasteric autoinhibition. Partially inhibited upon phosphorylation by PRCAKA/PKA. May be regulated through phosphorylation by CAMK1 and CAMK4. In terms of biological role, calcium/calmodulin-dependent protein kinase that belongs to a proposed calcium-triggered signaling cascade involved in a number of cellular processes. Phosphorylates CAMK1, CAMK1D, CAMK1G and CAMK4. Involved in regulating cell apoptosis. Promotes cell survival by phosphorylating AKT1/PKB that inhibits pro-apoptotic BAD/Bcl2-antagonist of cell death. The protein is Calcium/calmodulin-dependent protein kinase kinase 1 (Camkk1) of Rattus norvegicus (Rat).